Consider the following 812-residue polypeptide: Protein FAM83G (812 aa).

Alanine 2 carries the N-acetylalanine modification. Positions 2–312 (AFSQVQCLDD…LYLMSQSVSL (311 aa)) are DUF1669. The residue at position 4 (serine 4) is a Phosphoserine. Positions 76 to 119 (PGSEDPRVSGRRPEPQDNGGADASEETSAAGGPPATETLPSLEY) are disordered. A compositionally biased stretch (basic and acidic residues) spans 79–90 (EDPRVSGRRPEP). Residues serine 124, serine 127, and serine 356 each carry the phosphoserine modification. Disordered stretches follow at residues 362 to 389 (KSSS…GDLS), 455 to 509 (ASAQ…KPRT), and 521 to 812 (SDIG…HKEP). Over residues 455–467 (ASAQHQLWKQSQG) the composition is skewed to polar residues. The span at 471–480 (CPAPCPPPAP) shows a compositional bias: pro residues. Over residues 545–562 (STASESEVPQQQHSSMTQ) the composition is skewed to polar residues. Over residues 576 to 586 (LDEDEDDDDDY) the composition is skewed to acidic residues. The span at 589–598 (LSDQDSLSGS) shows a compositional bias: low complexity. 4 positions are modified to phosphoserine: serine 609, serine 613, serine 615, and serine 649. A compositionally biased stretch (low complexity) spans 721–731 (SSSKKASPAAA). Residues 761–772 (LRAELRATEEHA) are compositionally biased toward basic and acidic residues.

It belongs to the FAM83 family. As to quaternary structure, interacts with SMAD1 (via MH2 domain); in a SMAD4-independent manner. Directly interacts (via DUF1669) with casein kinase isoforms CSNK1A1 and CSNK1A1L. BMP signaling induces the phosphorylation by BMPR1A at Ser-609, Ser-613 and Ser-615. Phosphorylation at Ser-609 is necessary for the activation of SMAD4-independent BMP target genes such as NEDD9 and ASNS. In terms of processing, phosphorylated by CSNK1A1.

The protein localises to the cytoplasm. It localises to the cytosol. The protein resides in the nucleus. In terms of biological role, substrate for type I BMP receptor kinase involved in regulation of some target genes of the BMP signaling pathway. Also regulates the expression of several non-BMP target genes, suggesting a role in other signaling pathways. This Mus musculus (Mouse) protein is Protein FAM83G (Fam83g).